The chain runs to 313 residues: Ribosomal RNA small subunit methyltransferase H (313 aa).

Residues 35–37 (GGH), Asp-55, Phe-79, Asp-101, and Gln-108 each bind S-adenosyl-L-methionine.

The protein belongs to the methyltransferase superfamily. RsmH family.

The protein resides in the cytoplasm. The enzyme catalyses cytidine(1402) in 16S rRNA + S-adenosyl-L-methionine = N(4)-methylcytidine(1402) in 16S rRNA + S-adenosyl-L-homocysteine + H(+). Functionally, specifically methylates the N4 position of cytidine in position 1402 (C1402) of 16S rRNA. The chain is Ribosomal RNA small subunit methyltransferase H from Erwinia tasmaniensis (strain DSM 17950 / CFBP 7177 / CIP 109463 / NCPPB 4357 / Et1/99).